The chain runs to 217 residues: Cytochrome c biogenesis ATP-binding export protein CcmA (217 aa).

An ABC transporter domain is found at L16–G214. G48 to T55 contributes to the ATP binding site.

It belongs to the ABC transporter superfamily. CcmA exporter (TC 3.A.1.107) family. As to quaternary structure, the complex is composed of two ATP-binding proteins (CcmA) and two transmembrane proteins (CcmB).

It localises to the cell inner membrane. It catalyses the reaction heme b(in) + ATP + H2O = heme b(out) + ADP + phosphate + H(+). Functionally, part of the ABC transporter complex CcmAB involved in the biogenesis of c-type cytochromes; once thought to export heme, this seems not to be the case, but its exact role is uncertain. Responsible for energy coupling to the transport system. The chain is Cytochrome c biogenesis ATP-binding export protein CcmA from Alcanivorax borkumensis (strain ATCC 700651 / DSM 11573 / NCIMB 13689 / SK2).